The sequence spans 122 residues: Biogenesis of lysosome-related organelles complex 1 subunit BLS1 (122 aa).

At Ser-33 the chain carries Phosphoserine.

It belongs to the BLOC1S1 family. Component of the biogenesis of lysosome-related organelles complex-1 (BLOC-1) composed of at least BLI1, BLS1, CNL1, KXD1, SNN1 and VAB2.

It localises to the endosome. Component of the biogenesis of lysosome-related organelles complex-1 (BLOC-1), a complex involved in endosomal cargo sorting. The chain is Biogenesis of lysosome-related organelles complex 1 subunit BLS1 (BLS1) from Saccharomyces cerevisiae (strain YJM789) (Baker's yeast).